Reading from the N-terminus, the 275-residue chain is Lectin (275 aa).

Positions M1–S30 are cleaved as a signal peptide. Residues D111 and G129 each contribute to the D-glucose site. Mn(2+) contacts are provided by E149 and D151. Residues D151, F153, N155, and D159 each coordinate Ca(2+). Mn(2+) is bound by residues D159 and H166. The propeptide occupies N211–N217. Positions 246 and 247 each coordinate D-glucose. The propeptide occupies K270–A275.

The protein belongs to the leguminous lectin family. As to quaternary structure, heterotetramer of two alpha and two beta chains. Post-translationally, the mature form consists of two chains, alpha and beta, produced by cleavage of the immature protein. These remain cleaved, yet fold together to form one subunit.

D-mannose specific lectin. This Lens culinaris subsp. orientalis (Oriental wild lentil) protein is Lectin.